A 786-amino-acid chain; its full sequence is DNA repair and recombination protein RAD54-like (786 aa).

Positions 2–9 (RRSLAPSQ) are required for chromatin remodeling, strand pairing activities and coupling of ATPase activity. Threonine 22 carries the phosphothreonine modification. A Helicase ATP-binding domain is found at 165-340 (EGKRGSFNGC…FSLVNFVNPE (176 aa)). 178 to 185 (DEMGLGKT) is an ATP binding site. Residues 291–294 (DEGH) carry the DEGH box motif. The 158-residue stretch at 497–654 (LLDFMLAAIR…NNESVEKHFT (158 aa)) folds into the Helicase C-terminal domain. Residues 738 to 786 (EAKPAATTTDEDEELSDSKRKAKKTLASDDDDDEDFVLNCSSGEEFSGF) form a disordered region. The span at 776-786 (NCSSGEEFSGF) shows a compositional bias: polar residues.

The protein belongs to the SNF2/RAD54 helicase family. In terms of assembly, interacts (via N-terminus) with spn-A/Rad51.

The protein localises to the nucleus. Its function is as follows. Involved in mitotic DNA repair and meiotic recombination. Functions in the recombinational DNA repair pathway. Essential for interhomolog gene conversion (GC), but may have a less important role in intersister GC than spn-A/Rad51. In the presence of DNA, spn-A/Rad51 enhances the ATPase activity of okr/Rad54. The sequence is that of DNA repair and recombination protein RAD54-like from Drosophila grimshawi (Hawaiian fruit fly).